Reading from the N-terminus, the 112-residue chain is Phosphoribosyl-AMP cyclohydrolase (112 aa).

Position 76 (D76) interacts with Mg(2+). C77 serves as a coordination point for Zn(2+). Mg(2+)-binding residues include D78 and D80. Zn(2+) is bound by residues C93 and C100.

This sequence belongs to the PRA-CH family. Homodimer. It depends on Mg(2+) as a cofactor. Requires Zn(2+) as cofactor.

The protein resides in the cytoplasm. It carries out the reaction 1-(5-phospho-beta-D-ribosyl)-5'-AMP + H2O = 1-(5-phospho-beta-D-ribosyl)-5-[(5-phospho-beta-D-ribosylamino)methylideneamino]imidazole-4-carboxamide. It participates in amino-acid biosynthesis; L-histidine biosynthesis; L-histidine from 5-phospho-alpha-D-ribose 1-diphosphate: step 3/9. Its function is as follows. Catalyzes the hydrolysis of the adenine ring of phosphoribosyl-AMP. This is Phosphoribosyl-AMP cyclohydrolase from Streptococcus thermophilus (strain ATCC BAA-491 / LMD-9).